Here is a 138-residue protein sequence, read N- to C-terminus: Large ribosomal subunit protein uL16c (138 aa).

This sequence belongs to the universal ribosomal protein uL16 family. As to quaternary structure, part of the 50S ribosomal subunit.

It is found in the plastid. It localises to the chloroplast. This Emiliania huxleyi (Coccolithophore) protein is Large ribosomal subunit protein uL16c.